We begin with the raw amino-acid sequence, 65 residues long: Ferredoxin-like protein in vnf region (65 aa).

2 4Fe-4S ferredoxin-type domains span residues 2–29 and 30–65; these read AMAI…VLQG and GIYV…PLDD. The [4Fe-4S] cluster site is built by Cys-10, Cys-13, Cys-16, Cys-20, Cys-39, Cys-42, Cys-50, and Cys-54.

[4Fe-4S] cluster is required as a cofactor.

The sequence is that of Ferredoxin-like protein in vnf region from Azotobacter chroococcum mcd 1.